A 223-amino-acid polypeptide reads, in one-letter code: Small ribosomal subunit protein uS3 (223 aa).

Residues 39 to 107 (VREFLHKKLA…PVQINIEEVR (69 aa)) form the KH type-2 domain.

This sequence belongs to the universal ribosomal protein uS3 family. As to quaternary structure, part of the 30S ribosomal subunit. Forms a tight complex with proteins S10 and S14.

Binds the lower part of the 30S subunit head. Binds mRNA in the 70S ribosome, positioning it for translation. This Francisella tularensis subsp. holarctica (strain FTNF002-00 / FTA) protein is Small ribosomal subunit protein uS3.